An 857-amino-acid chain; its full sequence is Leucine--tRNA ligase (857 aa).

Positions 42-52 (PYPSGRLHMGH) match the 'HIGH' region motif. The 'KMSKS' region motif lies at 617–621 (KMSKS). Lys-620 provides a ligand contact to ATP.

Belongs to the class-I aminoacyl-tRNA synthetase family.

The protein localises to the cytoplasm. The enzyme catalyses tRNA(Leu) + L-leucine + ATP = L-leucyl-tRNA(Leu) + AMP + diphosphate. This Vibrio vulnificus (strain CMCP6) protein is Leucine--tRNA ligase.